Here is a 188-residue protein sequence, read N- to C-terminus: dCTP deaminase (188 aa).

DCTP contacts are provided by residues 111–116 (KSTYAR), 135–137 (TLE), glutamine 156, tyrosine 170, and glutamine 180. Glutamate 137 functions as the Proton donor/acceptor in the catalytic mechanism.

The protein belongs to the dCTP deaminase family. In terms of assembly, homotrimer.

The enzyme catalyses dCTP + H2O + H(+) = dUTP + NH4(+). Its pathway is pyrimidine metabolism; dUMP biosynthesis; dUMP from dCTP (dUTP route): step 1/2. In terms of biological role, catalyzes the deamination of dCTP to dUTP. The chain is dCTP deaminase from Francisella philomiragia subsp. philomiragia (strain ATCC 25017 / CCUG 19701 / FSC 153 / O#319-036).